The chain runs to 196 residues: Endonuclease V (196 aa).

Mg(2+) is bound by residues D37 and D98.

Belongs to the endonuclease V family. Requires Mg(2+) as cofactor.

It is found in the cytoplasm. The enzyme catalyses Endonucleolytic cleavage at apurinic or apyrimidinic sites to products with a 5'-phosphate.. Functionally, DNA repair enzyme involved in the repair of deaminated bases. Selectively cleaves double-stranded DNA at the second phosphodiester bond 3' to a deoxyinosine leaving behind the intact lesion on the nicked DNA. The protein is Endonuclease V of Sulfolobus acidocaldarius (strain ATCC 33909 / DSM 639 / JCM 8929 / NBRC 15157 / NCIMB 11770).